Reading from the N-terminus, the 320-residue chain is Aspartate carbamoyltransferase catalytic subunit (320 aa).

Carbamoyl phosphate is bound by residues arginine 68 and threonine 69. Lysine 96 is an L-aspartate binding site. Carbamoyl phosphate-binding residues include arginine 118, histidine 148, and glutamine 151. The L-aspartate site is built by arginine 181 and arginine 236. The carbamoyl phosphate site is built by glycine 277 and proline 278.

This sequence belongs to the aspartate/ornithine carbamoyltransferase superfamily. ATCase family. Heterododecamer (2C3:3R2) of six catalytic PyrB chains organized as two trimers (C3), and six regulatory PyrI chains organized as three dimers (R2).

The enzyme catalyses carbamoyl phosphate + L-aspartate = N-carbamoyl-L-aspartate + phosphate + H(+). It functions in the pathway pyrimidine metabolism; UMP biosynthesis via de novo pathway; (S)-dihydroorotate from bicarbonate: step 2/3. Its function is as follows. Catalyzes the condensation of carbamoyl phosphate and aspartate to form carbamoyl aspartate and inorganic phosphate, the committed step in the de novo pyrimidine nucleotide biosynthesis pathway. The protein is Aspartate carbamoyltransferase catalytic subunit of Delftia acidovorans (strain DSM 14801 / SPH-1).